The primary structure comprises 540 residues: 2-isopropylmalate synthase (540 aa).

In terms of domain architecture, Pyruvate carboxyltransferase spans 8 to 271 (VLIFDTTLRD…NPFFGRESDS (264 aa)). Residues Asp-17, His-208, His-210, and Asn-244 each coordinate Mn(2+). The regulatory domain stretch occupies residues 408 to 540 (QLRLVQVSCG…AVLADRRPGI (133 aa)).

This sequence belongs to the alpha-IPM synthase/homocitrate synthase family. LeuA type 1 subfamily. Homodimer. Mn(2+) is required as a cofactor.

It is found in the cytoplasm. It catalyses the reaction 3-methyl-2-oxobutanoate + acetyl-CoA + H2O = (2S)-2-isopropylmalate + CoA + H(+). Its pathway is amino-acid biosynthesis; L-leucine biosynthesis; L-leucine from 3-methyl-2-oxobutanoate: step 1/4. Functionally, catalyzes the condensation of the acetyl group of acetyl-CoA with 3-methyl-2-oxobutanoate (2-ketoisovalerate) to form 3-carboxy-3-hydroxy-4-methylpentanoate (2-isopropylmalate). The protein is 2-isopropylmalate synthase of Prochlorococcus marinus (strain MIT 9303).